The sequence spans 115 residues: Small ribosomal subunit protein bS6 (115 aa).

Belongs to the bacterial ribosomal protein bS6 family.

Its function is as follows. Binds together with bS18 to 16S ribosomal RNA. The polypeptide is Small ribosomal subunit protein bS6 (Syntrophotalea carbinolica (strain DSM 2380 / NBRC 103641 / GraBd1) (Pelobacter carbinolicus)).